We begin with the raw amino-acid sequence, 208 residues long: Ribosomal RNA small subunit methyltransferase G (208 aa).

Residues Gly-76, Leu-81, 127-128, and Arg-142 contribute to the S-adenosyl-L-methionine site; that span reads VE.

Belongs to the methyltransferase superfamily. RNA methyltransferase RsmG family.

The protein localises to the cytoplasm. The enzyme catalyses guanosine(527) in 16S rRNA + S-adenosyl-L-methionine = N(7)-methylguanosine(527) in 16S rRNA + S-adenosyl-L-homocysteine. Functionally, specifically methylates the N7 position of guanine in position 527 of 16S rRNA. This chain is Ribosomal RNA small subunit methyltransferase G, found in Legionella pneumophila subsp. pneumophila (strain Philadelphia 1 / ATCC 33152 / DSM 7513).